The sequence spans 673 residues: Flotillin family inner membrane protein sll1021 (673 aa).

The helical transmembrane segment at 60–80 (LLFFPVVIIAVIFLILVTIFL) threads the bilayer. Residues 639 to 673 (LQDPPSVSPPSAAVSEDDWPDLAPPTETNFSPEEI) are disordered. The segment covering 664–673 (TETNFSPEEI) has biased composition (polar residues).

The protein belongs to the band 7/mec-2 family. Flotillin subfamily. In terms of assembly, homooligomerizes.

Its subcellular location is the cell inner membrane. The protein resides in the membrane raft. Its function is as follows. Found in functional membrane microdomains (FMM) that may be equivalent to eukaryotic membrane rafts. FMMs are highly dynamic and increase in number as cells age. Flotillins are thought to be important factors in membrane fluidity. The protein is Flotillin family inner membrane protein sll1021 of Synechocystis sp. (strain ATCC 27184 / PCC 6803 / Kazusa).